The chain runs to 555 residues: Splicing factor U2af large subunit A (555 aa).

Residues 1 to 165 (MRDYEGNGVD…ISGFDMAPPT (165 aa)) form a disordered region. 2 stretches are compositionally biased toward basic and acidic residues: residues 23–81 (ISRD…EKDR) and 90–127 (RDRSDRRERERTRDRDEDDLHRSRDYDRRRDNDKDRED). Residues 143-155 (SKSRSRSPSKSKR) are compositionally biased toward basic residues. RRM domains lie at 221 to 304 (RRVY…RPSD), 341 to 419 (DRIF…RANQ), and 460 to 546 (EVVT…YPEN).

It belongs to the splicing factor SR family. In terms of tissue distribution, expressed in stems, leaves and apical buds.

It localises to the nucleus. Necessary for the splicing of pre-mRNA. Binds to the U -enriched regions of plant introns. The protein is Splicing factor U2af large subunit A (U2AF65A) of Nicotiana plumbaginifolia (Leadwort-leaved tobacco).